The chain runs to 180 residues: Molybdopterin synthase catalytic subunit (180 aa).

A compositionally biased stretch (polar residues) spans 1–10 (MSSTTPTTEP). Positions 1-31 (MSSTTPTTEPDQLPPHLDPQTYPRTTTNPTL) are disordered. Residues 21 to 31 (TYPRTTTNPTL) show a composition bias toward low complexity. Substrate-binding positions include 131–132 (HR), K147, and 154–156 (KKE).

The protein belongs to the MoaE family. MOCS2B subfamily. As to quaternary structure, heterotetramer; composed of 2 small (MOCS2A) and 2 large (MOCS2B) subunits.

It localises to the cytoplasm. It catalyses the reaction 2 [molybdopterin-synthase sulfur-carrier protein]-C-terminal-Gly-aminoethanethioate + cyclic pyranopterin phosphate + H2O = molybdopterin + 2 [molybdopterin-synthase sulfur-carrier protein]-C-terminal Gly-Gly + 2 H(+). It functions in the pathway cofactor biosynthesis; molybdopterin biosynthesis. Its function is as follows. Catalytic subunit of the molybdopterin synthase complex, a complex that catalyzes the conversion of precursor Z into molybdopterin. Acts by mediating the incorporation of 2 sulfur atoms from thiocarboxylated MOCS2A into precursor Z to generate a dithiolene group. This Aspergillus niger (strain ATCC MYA-4892 / CBS 513.88 / FGSC A1513) protein is Molybdopterin synthase catalytic subunit.